We begin with the raw amino-acid sequence, 119 residues long: MNLDQYLPVLLFILVGIAVGVVPLVLGYVLGPNRPDAAKNSPYECGFEAFDDARMKFDVRYYLVAILFILFDLEIAFLFPWAVTLQQVGMAGFVAVLIFLTILVVGFAYEWKKGALDWE.

Helical transmembrane passes span 9–29 (VLLFILVGIAVGVVPLVLGYV), 63–83 (LVAILFILFDLEIAFLFPWAV), and 88–108 (VGMAGFVAVLIFLTILVVGFA).

The protein belongs to the complex I subunit 3 family. NDH-1 is composed of 14 different subunits. Subunits NuoA, H, J, K, L, M, N constitute the membrane sector of the complex.

The protein localises to the cell inner membrane. It catalyses the reaction a quinone + NADH + 5 H(+)(in) = a quinol + NAD(+) + 4 H(+)(out). NDH-1 shuttles electrons from NADH, via FMN and iron-sulfur (Fe-S) centers, to quinones in the respiratory chain. The immediate electron acceptor for the enzyme in this species is believed to be ubiquinone. Couples the redox reaction to proton translocation (for every two electrons transferred, four hydrogen ions are translocated across the cytoplasmic membrane), and thus conserves the redox energy in a proton gradient. The polypeptide is NADH-quinone oxidoreductase subunit A (Verminephrobacter eiseniae (strain EF01-2)).